A 535-amino-acid polypeptide reads, in one-letter code: Glutamate--cysteine ligase (535 aa).

This sequence belongs to the glutamate--cysteine ligase type 1 family. Type 1 subfamily.

The enzyme catalyses L-cysteine + L-glutamate + ATP = gamma-L-glutamyl-L-cysteine + ADP + phosphate + H(+). Its pathway is sulfur metabolism; glutathione biosynthesis; glutathione from L-cysteine and L-glutamate: step 1/2. This Pseudomonas syringae pv. syringae protein is Glutamate--cysteine ligase.